The chain runs to 96 residues: DNA-directed RNA polymerase subunit Rpo11 (96 aa).

The protein belongs to the archaeal Rpo11/eukaryotic RPB11/RPC19 RNA polymerase subunit family. In terms of assembly, part of the RNA polymerase complex.

The protein resides in the cytoplasm. The enzyme catalyses RNA(n) + a ribonucleoside 5'-triphosphate = RNA(n+1) + diphosphate. DNA-dependent RNA polymerase (RNAP) catalyzes the transcription of DNA into RNA using the four ribonucleoside triphosphates as substrates. This chain is DNA-directed RNA polymerase subunit Rpo11, found in Methanococcus maripaludis (strain C5 / ATCC BAA-1333).